The sequence spans 129 residues: UPF0047 protein Mb2586c (129 aa).

Belongs to the UPF0047 family.

The polypeptide is UPF0047 protein Mb2586c (Mycobacterium bovis (strain ATCC BAA-935 / AF2122/97)).